The sequence spans 1369 residues: MSTRWRYYNSKRGNGFRGRGRGRGRGTSLTAVALPRDDNFHKGAQDGAYFKDMPMDPEQFRDETVLSLSFAQGMLGAAYYEQSSQLLKIMNDISEDLEFRFLKRLIDDVKPTLIIANRSQDLEFIKFLTTRYDPQEKIYEDGTTEEGTSEDTVPTWDSSLAYSTDETTAEKEEKEEDEDDDDEGLPAKLNKLPNNFFRMSRAIERLKAMAGSHDSSMTEEDKYIIIKMRFDIEAVNMIRSFGALLLFLDETRMGVTDDPLSVTSPIKSIKTFTLGNLVEIDFNTIQALDILPKETENKKTFGQGRSLYQLMDKCRSTVGKKCLRKWFRNPTTDRDDLVSRQKCVHYFKQDWNAEVTAKLSSILGRVKALNSVFQKFQSGTAQLIHWECFVSTVNALVEILNIIRQTPISKEFPVESDLLREVSEIAVIAGSIINFAESKIQGRVTVMNGIDEELDEIRDTYENMPMVLTAIAKQEEARLGLPPYSNVACVYIPLVGFVLSVPRDYGVESQPDMTLLYSTHEDLRVRNATTSRLDDEFGDILMRLIDSQTAIILTLKTRVMKKKRSIIKLLSIASRIDVLISFGLIAAQNGWNCPALVDEPVIEAVELYHPISVLVVKKSFVPNQVSSGRDGIKASIITGPNACGKSVYMKSIGIMVFLSHIGSFVPARHAKIGIVDRIVTRMFTVDSVLDGMSTFAKDVEQVALALRKATGNSLVIIDEFGKGTMTEVGLSLLASVMTYWMNRGADRCPHIFLSSHFHALPNYIPLETNIATFLTFTVLREAGGKIKYLFRMTPGLVDCSFALSVAKEEGIPPPVIGRACRIYKALKAGTLLKEIKAEVSNDNEKQLVEDMDVVLADEDGFMAAVESFVKRKKTSFCESSMRNVSEEIEKERSEASTPASKSRSTITARSNSVLSSRSMASVDQLSVLDALLPKKKKKKVTGSSMESSMSPDPFQEEDEGTEGEEDQISAPVSRPTLPSVQKYASEEEKQQSINSRHSFSTRTAIHIPTPIQMGEAGGVKRPRSTSTSSPGPSASKSVRTEVFKKTPNVKESQVLETPKQLSISSFLEPKFPSSEKDVISRVSERYLQSDPFKTPISDRRSQQSSRHSTPKNRSMNQSLIQSARDTPHETIRSSNEVNPEFFNIFNFPDDSILKSQDTYDPNVTPRSSSRRELRPDVSHSQNSQFGEVFSELGTQFSIFNSQQSFPGNSMGTTNPDCSIFDDFFANSQDGEKKIDSTKTSMPIVNSDNFIFKTPEPRSSEKQRSLLKNKGQASNSSISPSSLILGQLAFGDVDQTPRPRGDNPIEFQYDVVDDDDPIFEEKNCSAPVFEFLKSNDDEEDDEFLKSFLETEGSLHIDTSADETIDRSKRS.

Positions 138-190 (IYEDGTTEEGTSEDTVPTWDSSLAYSTDETTAEKEEKEEDEDDDDEGLPAKLN) are disordered. A compositionally biased stretch (acidic residues) spans 173–184 (EKEEDEDDDDEG). An ATP-binding site is contributed by 639 to 646 (GPNACGKS). Disordered stretches follow at residues 880–915 (SMRN…SVLS), 935–1135 (KKKK…RSSN), 1153–1182 (LKSQ…HSQN), and 1248–1278 (NFIF…SSIS). Over residues 884–894 (VSEEIEKERSE) the composition is skewed to basic and acidic residues. 2 stretches are compositionally biased toward polar residues: residues 895-915 (ASTP…SVLS) and 941-950 (TGSSMESSMS). A compositionally biased stretch (acidic residues) spans 954–967 (FQEEDEGTEGEEDQ). Over residues 991–1003 (QSINSRHSFSTRT) the composition is skewed to polar residues. A compositionally biased stretch (low complexity) spans 1024-1037 (STSTSSPGPSASKS). Over residues 1049–1065 (VKESQVLETPKQLSISS) the composition is skewed to polar residues. The span at 1073 to 1084 (SSEKDVISRVSE) shows a compositional bias: basic and acidic residues. Composition is skewed to polar residues over residues 1111 to 1124 (KNRS…QSAR) and 1153 to 1167 (LKSQ…TPRS). Over residues 1254-1263 (PEPRSSEKQR) the composition is skewed to basic and acidic residues.

This sequence belongs to the DNA mismatch repair MutS family. In terms of assembly, heterooligomer of him-14 and msh-5. Interacts with the brc-1-brd-1 heterodimer. In terms of tissue distribution, expressed in the germline.

It is found in the chromosome. Crucial component in meiotic recombination, functioning at some point after the initiation step of recombination. Plays a role in promoting the crossover outcome of meiotic recombination events. Required for formation of normal meiotic crossover, and crossover and chiasmata generated by artificially made DNA breaks. Together with him-14 and zhp-3 plays a role in the activation of DNA damage-dependent apoptosis at the DNA damage checkpoint in pachytene cells. The protein is MutS protein homolog 5 of Caenorhabditis elegans.